We begin with the raw amino-acid sequence, 425 residues long: Probable threonylcarbamoyladenosine tRNA methylthiotransferase (425 aa).

One can recognise an MTTase N-terminal domain in the interval 2-110; that stretch reads VKVYIENYGC…IVQAVEYAMR (109 aa). [4Fe-4S] cluster-binding residues include C11, C47, C76, C148, C152, and C155. Positions 134–363 constitute a Radical SAM core domain; it reads SPRNVYFILP…HRIRLQISYE (230 aa). Residues 366–425 form the TRAM domain; it reads RKYIGKKVKVLIHGEGKKGNVDAVTMNYKHIILPEGRKGEFREARVKNAASTYLLGEIIT.

This sequence belongs to the methylthiotransferase family. CDKAL1 subfamily. It depends on [4Fe-4S] cluster as a cofactor.

It carries out the reaction N(6)-L-threonylcarbamoyladenosine(37) in tRNA + (sulfur carrier)-SH + AH2 + 2 S-adenosyl-L-methionine = 2-methylsulfanyl-N(6)-L-threonylcarbamoyladenosine(37) in tRNA + (sulfur carrier)-H + 5'-deoxyadenosine + L-methionine + A + S-adenosyl-L-homocysteine + 2 H(+). In terms of biological role, catalyzes the methylthiolation of N6-threonylcarbamoyladenosine (t(6)A), leading to the formation of 2-methylthio-N6-threonylcarbamoyladenosine (ms(2)t(6)A) at position 37 in tRNAs that read codons beginning with adenine. This chain is Probable threonylcarbamoyladenosine tRNA methylthiotransferase, found in Pyrococcus horikoshii (strain ATCC 700860 / DSM 12428 / JCM 9974 / NBRC 100139 / OT-3).